Here is a 736-residue protein sequence, read N- to C-terminus: Protein DSF2 (736 aa).

Over residues 1–10 (MNQNLKNTSW) the composition is skewed to polar residues. Disordered stretches follow at residues 1–46 (MNQN…DSQF), 178–208 (SGMK…SPNP), 229–410 (ISDN…SGEN), and 440–461 (FKTA…ARPN). The span at 14-24 (IGSDDQERKAN) shows a compositional bias: basic and acidic residues. 2 stretches are compositionally biased toward polar residues: residues 25-46 (SSEV…DSQF) and 197-208 (ENGNRSTNSPNP). Low complexity predominate over residues 238–256 (NNANSKNNRTTSNNINTST). Over residues 264 to 284 (KQSCPNEFTTTQKSNCLYRNG) the composition is skewed to polar residues. Low complexity-rich tracts occupy residues 285 to 294 (SSTSTNTSFS), 303 to 318 (KTQS…FSKL), and 335 to 350 (SNSS…TMTN). Positions 374 to 385 (KLFKSPRTRAKN) are enriched in basic residues. Residues 392 to 410 (EGSSPIRSATNSLDFSGEN) show a composition bias toward polar residues.

This chain is Protein DSF2 (DSF2), found in Saccharomyces cerevisiae (strain ATCC 204508 / S288c) (Baker's yeast).